We begin with the raw amino-acid sequence, 835 residues long: Involucrin (835 aa).

Positions M1–L15 are enriched in polar residues. 8 disordered regions span residues M1 to R133, E150 to P206, G221 to H285, G321 to Q342, G381 to E428, L446 to P486, G501 to E548, and L566 to L809. The span at E76–H91 shows a compositional bias: low complexity. Composition is skewed to basic and acidic residues over residues W92–R115 and Q159–Q168. Over residues Q169–G181 the composition is skewed to low complexity. Basic and acidic residues-rich tracts occupy residues Q182–Q198 and Q222–Q268. Low complexity-rich tracts occupy residues Q269–G281, Q329–G341, and Q389–G401. Basic and acidic residues-rich tracts occupy residues Q402–G421 and L446–E464. Positions Q509 to G521 are enriched in low complexity. Basic and acidic residues-rich tracts occupy residues Q522–G541, L566–E584, and K594–E620. The span at H655 to G668 shows a compositional bias: low complexity. Residues Q669–E685 show a composition bias toward basic and acidic residues. The span at L693 to P710 shows a compositional bias: low complexity. Composition is skewed to basic and acidic residues over residues K711–E721, Q729–A738, and K751–Q775. Residues Q776 to Q789 show a composition bias toward polar residues.

The protein belongs to the involucrin family. Directly or indirectly cross-linked to cornifelin (CNFN). Substrate of transglutaminase. Specific glutamines or lysines are cross-linked to keratins, desmoplakin and to inter involucrin molecules. As to expression, keratinocytes of epidermis and other stratified squamous epithelia.

It localises to the cytoplasm. Part of the insoluble cornified cell envelope (CE) of stratified squamous epithelia. This is Involucrin (IVL) from Pongo pygmaeus (Bornean orangutan).